We begin with the raw amino-acid sequence, 133 residues long: Fatty acid-binding protein (133 aa).

This sequence belongs to the calycin superfamily. Fatty-acid binding protein (FABP) family.

The sequence is that of Fatty acid-binding protein from Clonorchis sinensis (Chinese liver fluke).